We begin with the raw amino-acid sequence, 454 residues long: uncharacterized protein (454 aa).

This sequence belongs to the outer membrane factor (OMF) (TC 1.B.17) family.

This is an uncharacterized protein from Haemophilus influenzae (strain ATCC 51907 / DSM 11121 / KW20 / Rd).